A 358-amino-acid chain; its full sequence is Chromatin modification-related protein EAF3 (358 aa).

Residues 8-84 enclose the Tudor-knot domain; sequence KCLCYHGPLL…DEWVGLDRIR (77 aa). The disordered stretch occupies residues 103-184; sequence ELKNNGGKKK…KATPVLNKRS (82 aa). The span at 132–168 shows a compositional bias: low complexity; that stretch reads SRTSNSGSGTNTSASSTSASNPASSSSSGTTAAASSS. The MRG domain maps to 184 to 356; that stretch reads SHPKIHIKVP…TSSQYEGVAL (173 aa).

This sequence belongs to the MRG family. As to quaternary structure, component of the NuA4 histone acetyltransferase complex.

It localises to the nucleus. Involved in deacetylation of histones, chromatin assembly and chromosome segregation. May act as a transcriptional oscillator, directing histone deacetylases to specific chromosomal domains. Component of the NuA4 histone acetyltransferase complex which is involved in transcriptional activation of selected genes principally by acetylation of nucleosomal histone H4 and H2A. The NuA4 complex is also involved in DNA repair. The chain is Chromatin modification-related protein EAF3 (EAF3) from Kluyveromyces lactis (strain ATCC 8585 / CBS 2359 / DSM 70799 / NBRC 1267 / NRRL Y-1140 / WM37) (Yeast).